A 65-amino-acid polypeptide reads, in one-letter code: Large ribosomal subunit protein bL35 (65 aa).

It belongs to the bacterial ribosomal protein bL35 family.

This is Large ribosomal subunit protein bL35 from Proteus mirabilis (strain HI4320).